We begin with the raw amino-acid sequence, 457 residues long: Glutamyl-tRNA reductase (457 aa).

Residues 49 to 52 (TCNR), S109, 114 to 116 (ETQ), and Q120 each bind substrate. C50 acts as the Nucleophile in catalysis. 189–194 (GAGKMG) provides a ligand contact to NADP(+).

It belongs to the glutamyl-tRNA reductase family. Homodimer.

The enzyme catalyses (S)-4-amino-5-oxopentanoate + tRNA(Glu) + NADP(+) = L-glutamyl-tRNA(Glu) + NADPH + H(+). It participates in porphyrin-containing compound metabolism; protoporphyrin-IX biosynthesis; 5-aminolevulinate from L-glutamyl-tRNA(Glu): step 1/2. In terms of biological role, catalyzes the NADPH-dependent reduction of glutamyl-tRNA(Glu) to glutamate 1-semialdehyde (GSA). The protein is Glutamyl-tRNA reductase of Oceanobacillus iheyensis (strain DSM 14371 / CIP 107618 / JCM 11309 / KCTC 3954 / HTE831).